We begin with the raw amino-acid sequence, 325 residues long: Adenine deaminase (325 aa).

Residues H8, H10, and H186 each coordinate Zn(2+). The active-site Proton donor is the E189. D267 lines the Zn(2+) pocket. Residue D268 coordinates substrate.

The protein belongs to the metallo-dependent hydrolases superfamily. Adenosine and AMP deaminases family. Adenine deaminase type 2 subfamily. Requires Zn(2+) as cofactor.

It catalyses the reaction adenine + H2O + H(+) = hypoxanthine + NH4(+). Its function is as follows. Catalyzes the hydrolytic deamination of adenine to hypoxanthine. Plays an important role in the purine salvage pathway and in nitrogen catabolism. This Chelativorans sp. (strain BNC1) protein is Adenine deaminase.